We begin with the raw amino-acid sequence, 243 residues long: UTP--glucose-1-phosphate uridylyltransferase AglF (243 aa).

It belongs to the UDPGP type 2 family.

It catalyses the reaction alpha-D-glucose 1-phosphate + UTP + H(+) = UDP-alpha-D-glucose + diphosphate. Its pathway is cell surface structure biogenesis; S-layer biogenesis. Its function is as follows. Involved in the assembly of a N-linked pentasaccharide that decorates the S-layer glycoprotein and flagellins. Involved in the biosynthesis of the hexuronic acid found at position 3 of the pentasaccharide. The chain is UTP--glucose-1-phosphate uridylyltransferase AglF (aglF) from Haloferax volcanii (strain ATCC 29605 / DSM 3757 / JCM 8879 / NBRC 14742 / NCIMB 2012 / VKM B-1768 / DS2) (Halobacterium volcanii).